We begin with the raw amino-acid sequence, 452 residues long: Pup--protein ligase (452 aa).

Residue Glu-9 coordinates Mg(2+). Residue Arg-53 participates in ATP binding. Tyr-55 contributes to the Mg(2+) binding site. Asp-57 (proton acceptor) is an active-site residue. Glu-63 lines the Mg(2+) pocket. ATP contacts are provided by Thr-66 and Trp-419.

The protein belongs to the Pup ligase/Pup deamidase family. Pup-conjugating enzyme subfamily.

It catalyses the reaction ATP + [prokaryotic ubiquitin-like protein]-L-glutamate + [protein]-L-lysine = ADP + phosphate + N(6)-([prokaryotic ubiquitin-like protein]-gamma-L-glutamyl)-[protein]-L-lysine.. The protein operates within protein degradation; proteasomal Pup-dependent pathway. It participates in protein modification; protein pupylation. In terms of biological role, catalyzes the covalent attachment of the prokaryotic ubiquitin-like protein modifier Pup to the proteasomal substrate proteins, thereby targeting them for proteasomal degradation. This tagging system is termed pupylation. The ligation reaction involves the side-chain carboxylate of the C-terminal glutamate of Pup and the side-chain amino group of a substrate lysine. The polypeptide is Pup--protein ligase (Mycobacterium sp. (strain JLS)).